We begin with the raw amino-acid sequence, 1370 residues long: Zinc finger MYM-type protein 3 (1370 aa).

Composition is skewed to low complexity over residues Met1–Pro12, Ala40–Ala56, and Gly130–Ala146. 2 disordered regions span residues Met1–Val73 and Gly85–Lys310. Residues Thr227–Val255 show a composition bias toward basic and acidic residues. Phosphoserine is present on residues Ser265 and Ser269. Residues Ser265–Phe281 are compositionally biased toward acidic residues. Glycyl lysine isopeptide (Lys-Gly) (interchain with G-Cter in SUMO2) cross-links involve residues Lys310, Lys322, and Lys330. MYM-type zinc fingers lie at residues Gln334–Ser368, His380–Val424, His431–Gly466, Lys479–Leu513, Ser523–Tyr561, Tyr569–Val606, Phe614–Leu648, Lys655–Glu694, and Trp701–Ile735. Over residues Asn761 to Val789 the composition is skewed to polar residues. A disordered region spans residues Asn761–Asn831. Glycyl lysine isopeptide (Lys-Gly) (interchain with G-Cter in SUMO2) cross-links involve residues Lys780 and Lys788. The span at Glu790 to Asp799 shows a compositional bias: basic and acidic residues. Thr797 bears the Phosphothreonine mark. A Glycyl lysine isopeptide (Lys-Gly) (interchain with G-Cter in SUMO2) cross-link involves residue Lys806. The segment covering Val816–Thr827 has biased composition (pro residues). A phosphothreonine mark is found at Thr818 and Thr827. Residues Lys848, Lys862, Lys921, and Lys1276 each participate in a glycyl lysine isopeptide (Lys-Gly) (interchain with G-Cter in SUMO2) cross-link.

In terms of assembly, may be a component of a BHC histone deacetylase complex that contains HDAC1, HDAC2, HMG20B/BRAF35, KDM1A, RCOR1/CoREST, PHF21A/BHC80, ZMYM2, ZNF217, ZMYM3, GSE1 and GTF2I. In terms of tissue distribution, ubiquitously expressed in all embryonic stages and adult tissues.

Its subcellular location is the nucleus. Functionally, plays a role in the regulation of cell morphology and cytoskeletal organization. This is Zinc finger MYM-type protein 3 (Zmym3) from Mus musculus (Mouse).